We begin with the raw amino-acid sequence, 343 residues long: Holliday junction branch migration complex subunit RuvB (343 aa).

The tract at residues 1-185 is large ATPase domain (RuvB-L); it reads MMNENLDATG…FGISSRLQYY (185 aa). ATP-binding positions include L24, R25, G66, K69, T70, T71, 132-134, R175, Y185, and R222; that span reads EDY. T70 is a binding site for Mg(2+). The small ATPAse domain (RuvB-S) stretch occupies residues 186–256; it reads STELLSGIVE…IAKFGLKALN (71 aa). Residues 259 to 343 are head domain (RuvB-H); sequence AHGLDEMDNK…GSNQGGLFDN (85 aa). Residues R314 and R319 each coordinate DNA.

It belongs to the RuvB family. As to quaternary structure, homohexamer. Forms an RuvA(8)-RuvB(12)-Holliday junction (HJ) complex. HJ DNA is sandwiched between 2 RuvA tetramers; dsDNA enters through RuvA and exits via RuvB. An RuvB hexamer assembles on each DNA strand where it exits the tetramer. Each RuvB hexamer is contacted by two RuvA subunits (via domain III) on 2 adjacent RuvB subunits; this complex drives branch migration. In the full resolvosome a probable DNA-RuvA(4)-RuvB(12)-RuvC(2) complex forms which resolves the HJ.

Its subcellular location is the cytoplasm. It carries out the reaction ATP + H2O = ADP + phosphate + H(+). In terms of biological role, the RuvA-RuvB-RuvC complex processes Holliday junction (HJ) DNA during genetic recombination and DNA repair, while the RuvA-RuvB complex plays an important role in the rescue of blocked DNA replication forks via replication fork reversal (RFR). RuvA specifically binds to HJ cruciform DNA, conferring on it an open structure. The RuvB hexamer acts as an ATP-dependent pump, pulling dsDNA into and through the RuvAB complex. RuvB forms 2 homohexamers on either side of HJ DNA bound by 1 or 2 RuvA tetramers; 4 subunits per hexamer contact DNA at a time. Coordinated motions by a converter formed by DNA-disengaged RuvB subunits stimulates ATP hydrolysis and nucleotide exchange. Immobilization of the converter enables RuvB to convert the ATP-contained energy into a lever motion, pulling 2 nucleotides of DNA out of the RuvA tetramer per ATP hydrolyzed, thus driving DNA branch migration. The RuvB motors rotate together with the DNA substrate, which together with the progressing nucleotide cycle form the mechanistic basis for DNA recombination by continuous HJ branch migration. Branch migration allows RuvC to scan DNA until it finds its consensus sequence, where it cleaves and resolves cruciform DNA. The polypeptide is Holliday junction branch migration complex subunit RuvB (Christiangramia forsetii (strain DSM 17595 / CGMCC 1.15422 / KT0803) (Gramella forsetii)).